The following is a 221-amino-acid chain: Epididymal secretory glutathione peroxidase (221 aa).

The first 21 residues, 1–21 (MAIQLRVFYLVPLLLASYVQT), serve as a signal peptide directing secretion. C73 is an active-site residue.

It belongs to the glutathione peroxidase family. As to expression, epididymis.

The protein resides in the secreted. The catalysed reaction is 2 glutathione + H2O2 = glutathione disulfide + 2 H2O. Functionally, protects cells and enzymes from oxidative damage, by catalyzing the reduction of hydrogen peroxide, lipid peroxides and organic hydroperoxide, by glutathione. May constitute a glutathione peroxidase-like protective system against peroxide damage in sperm membrane lipids. This Rattus norvegicus (Rat) protein is Epididymal secretory glutathione peroxidase (Gpx5).